We begin with the raw amino-acid sequence, 60 residues long: uncharacterized protein (60 aa).

The protein to E.coli YjeQ and H.influenzae HI_1714.

This is an uncharacterized protein from Azotobacter vinelandii.